The primary structure comprises 151 residues: Transcriptional repressor NrdR (151 aa).

Residues 1-21 form a disordered region; that stretch reads MRCPFCGEADTQVKDSRPTED. A zinc finger spans residues 3–34; it reads CPFCGEADTQVKDSRPTEDGAAIRRRRFCPQC. Positions 11–21 are enriched in basic and acidic residues; the sequence is TQVKDSRPTED. The 91-residue stretch at 49–139 folds into the ATP-cone domain; the sequence is LVVVKADQRR…VYRDFREAKD (91 aa).

This sequence belongs to the NrdR family. Requires Zn(2+) as cofactor.

Functionally, negatively regulates transcription of bacterial ribonucleotide reductase nrd genes and operons by binding to NrdR-boxes. The chain is Transcriptional repressor NrdR from Acidiphilium cryptum (strain JF-5).